A 589-amino-acid chain; its full sequence is Coiled-coil domain-containing protein 22 homolog (589 aa).

2 coiled-coil regions span residues 287-426 (KTPL…LQTK) and 523-589 (CEEL…TSRQ). The disordered stretch occupies residues 568–589 (EMQNESQRLEESIRRMEVTSRQ). The span at 574–589 (QRLEESIRRMEVTSRQ) shows a compositional bias: basic and acidic residues.

The protein belongs to the CCDC22 family.

In Aedes aegypti (Yellowfever mosquito), this protein is Coiled-coil domain-containing protein 22 homolog.